The primary structure comprises 473 residues: Siroheme synthase (473 aa).

The precorrin-2 dehydrogenase /sirohydrochlorin ferrochelatase stretch occupies residues 1–203 (MTLFPIFADL…QQPGLAEQEL (203 aa)). NAD(+)-binding positions include 22–23 (AV) and 43–44 (PR). Serine 128 is subject to Phosphoserine. Residues 216 to 473 (GSVVLVGAGP…GLPGPQALAA (258 aa)) are uroporphyrinogen-III C-methyltransferase. Residue proline 225 participates in S-adenosyl-L-methionine binding. Aspartate 248 (proton acceptor) is an active-site residue. The active-site Proton donor is lysine 270. Residues 302–304 (GGD), isoleucine 307, 332–333 (TA), methionine 384, and glycine 413 contribute to the S-adenosyl-L-methionine site.

The protein in the N-terminal section; belongs to the precorrin-2 dehydrogenase / sirohydrochlorin ferrochelatase family. This sequence in the C-terminal section; belongs to the precorrin methyltransferase family.

It carries out the reaction uroporphyrinogen III + 2 S-adenosyl-L-methionine = precorrin-2 + 2 S-adenosyl-L-homocysteine + H(+). The catalysed reaction is precorrin-2 + NAD(+) = sirohydrochlorin + NADH + 2 H(+). It catalyses the reaction siroheme + 2 H(+) = sirohydrochlorin + Fe(2+). It participates in cofactor biosynthesis; adenosylcobalamin biosynthesis; precorrin-2 from uroporphyrinogen III: step 1/1. It functions in the pathway cofactor biosynthesis; adenosylcobalamin biosynthesis; sirohydrochlorin from precorrin-2: step 1/1. The protein operates within porphyrin-containing compound metabolism; siroheme biosynthesis; precorrin-2 from uroporphyrinogen III: step 1/1. Its pathway is porphyrin-containing compound metabolism; siroheme biosynthesis; siroheme from sirohydrochlorin: step 1/1. It participates in porphyrin-containing compound metabolism; siroheme biosynthesis; sirohydrochlorin from precorrin-2: step 1/1. Multifunctional enzyme that catalyzes the SAM-dependent methylations of uroporphyrinogen III at position C-2 and C-7 to form precorrin-2 via precorrin-1. Then it catalyzes the NAD-dependent ring dehydrogenation of precorrin-2 to yield sirohydrochlorin. Finally, it catalyzes the ferrochelation of sirohydrochlorin to yield siroheme. In Bordetella parapertussis (strain 12822 / ATCC BAA-587 / NCTC 13253), this protein is Siroheme synthase.